Consider the following 670-residue polypeptide: Acetolactate synthase, chloroplastic (670 aa).

2 stretches are compositionally biased toward low complexity: residues 1–48 (MAAA…SSSS) and 55–77 (KSSS…TTPS). Residues 1–55 (MAAATTTTTTSSSISFSTKPSPSSSKSPLPISRFSLPFSLNPNKSSSSSRRRGIK) constitute a chloroplast transit peptide. The tract at residues 1 to 94 (MAAATTTTTT…ETFISRFAPD (94 aa)) is disordered. A thiamine diphosphate-binding site is contributed by Glu144. Ser186 lines the FAD pocket. Gln207 lines the thiamine diphosphate pocket. (R)-imazaquin contacts are provided by Lys220 and Arg246. Arg246 contacts FAD. Lys256 lines the chlorimuron-ethyl pocket. Residues Gly308 and 331-332 (TL) contribute to the FAD site. Cys340 is modified (cysteine sulfinic acid (-SO2H)). FAD contacts are provided by residues 349-352 (LGMH) and 371-375 (GVRFD). 376–377 (DR) lines the chlorimuron-ethyl pocket. Residues 395-396 (DI) and 414-415 (DV) contribute to the FAD site. Residues 414–446 (DVKLALQGMNKVLENRAEELKLDFGVWRNELNV) are a coiled coil. Position 487–488 (487–488 (QH)) interacts with thiamine diphosphate. Position 508–509 (508–509 (GG)) interacts with FAD. Residues 511-513 (GAM), 538-540 (DGS), and 565-570 (NQHLGM) contribute to the thiamine diphosphate site. The Mg(2+) site is built by Asp538, Asn565, and His567. Residues Trp574 and Ser653 each contribute to the chlorimuron-ethyl site.

It belongs to the TPP enzyme family. Homodimer or homotetramer. The acetolactate synthase complex contains both large catalytic subunits and small regulatory subunits. Homodimer. The acetolactate synthase complex contains 4 homodimers of the large catalytic subunits, and 1 homotetramer of the small regulatory subunits. It depends on Mg(2+) as a cofactor. FAD serves as cofactor. Requires thiamine diphosphate as cofactor.

Its subcellular location is the plastid. It is found in the chloroplast. The catalysed reaction is 2 pyruvate + H(+) = (2S)-2-acetolactate + CO2. It participates in amino-acid biosynthesis; L-isoleucine biosynthesis; L-isoleucine from 2-oxobutanoate: step 1/4. The protein operates within amino-acid biosynthesis; L-valine biosynthesis; L-valine from pyruvate: step 1/4. Inhibited by asymmetric aryl disulfides, triazolopyrimidine sulfonanilide compounds, isatin derivatives, and sulfonylurea and imidazolinone herbicides. Insensitive to feed-back inhibition by branched-chain amino acids. In terms of biological role, catalyzes the formation of acetolactate from pyruvate, the first step in valine and isoleucine biosynthesis. The polypeptide is Acetolactate synthase, chloroplastic (ALS) (Arabidopsis thaliana (Mouse-ear cress)).